The sequence spans 156 residues: 6,7-dimethyl-8-ribityllumazine synthase (156 aa).

5-amino-6-(D-ribitylamino)uracil is bound by residues F22, A57–E59, and T81–I83. G86–T87 contacts (2S)-2-hydroxy-3-oxobutyl phosphate. Residue H89 is the Proton donor of the active site. F114 provides a ligand contact to 5-amino-6-(D-ribitylamino)uracil. R128 lines the (2S)-2-hydroxy-3-oxobutyl phosphate pocket.

Belongs to the DMRL synthase family. Forms an icosahedral capsid composed of 60 subunits, arranged as a dodecamer of pentamers.

The enzyme catalyses (2S)-2-hydroxy-3-oxobutyl phosphate + 5-amino-6-(D-ribitylamino)uracil = 6,7-dimethyl-8-(1-D-ribityl)lumazine + phosphate + 2 H2O + H(+). Its pathway is cofactor biosynthesis; riboflavin biosynthesis; riboflavin from 2-hydroxy-3-oxobutyl phosphate and 5-amino-6-(D-ribitylamino)uracil: step 1/2. In terms of biological role, catalyzes the formation of 6,7-dimethyl-8-ribityllumazine by condensation of 5-amino-6-(D-ribitylamino)uracil with 3,4-dihydroxy-2-butanone 4-phosphate. This is the penultimate step in the biosynthesis of riboflavin. This chain is 6,7-dimethyl-8-ribityllumazine synthase, found in Vibrio campbellii (strain ATCC BAA-1116).